The sequence spans 502 residues: Neuronal acetylcholine receptor subunit alpha-7 (502 aa).

Positions M1–Q22 are cleaved as a signal peptide. Residues G23 to Y233 are Extracellular-facing. Residues R42 and V44 each coordinate Ca(2+). N46, N90, and N133 each carry an N-linked (GlcNAc...) asparagine glycan. C150 and C164 are disulfide-bonded. Ca(2+)-binding residues include S172 and Y210. C212 and C213 are joined by a disulfide. Helical transmembrane passes span G234–L254, G259–V279, and L292–L315. Residues E260–T267 are essential for TMEM35A/NACHO-mediated proper subunit assembly and trafficking to cell membrane. The Cytoplasmic portion of the chain corresponds to Q316–V466. A helical transmembrane segment spans residues V467 to S489.

This sequence belongs to the ligand-gated ion channel (TC 1.A.9) family. Acetylcholine receptor (TC 1.A.9.1) subfamily. Alpha-7/CHRNA7 sub-subfamily. In terms of assembly, homopentamer. Can also form heteropentamers with CHRNB2, mainly found in basal forebrain cholinergic neurons. Interacts with RIC3; which is required for proper folding and assembly. Interacts with LYPD6. Interacts with CANX. Post-translationally, glycosylations at Asn-46, Asn-90 and Asn-133 are essential for TMEM35A/NACHO-mediated proper subunit assembly and trafficking to the cell membrane. Expressed in neuronal cells. Expressed in macrophages (at protein level).

The protein resides in the postsynaptic cell membrane. It localises to the cell membrane. The catalysed reaction is Ca(2+)(in) = Ca(2+)(out). It catalyses the reaction K(+)(in) = K(+)(out). The enzyme catalyses Na(+)(in) = Na(+)(out). It carries out the reaction choline(out) = choline(in). The catalysed reaction is NH4(+)(in) = NH4(+)(out). It catalyses the reaction L-arginine(in) = L-arginine(out). The enzyme catalyses guanidine(out) = guanidine(in). With respect to regulation, activated by a myriad of ligands such as acetylcholine, cytisine, nicotine, choline and epibatidine. Oligomeric amyloid-beta protein 42 activates specifially CHRNA7:CHRNB2 nAchRs. Activity is modulated by positive allosteric modulators (PAMs), such as flavonoids, with a wide range of chemical diversity, pharmacological sensitivity and efficacy. AChR activity is inhibited by the antagonists alpha-conotoxons RgIA, ImI and ImII, small disulfide-constrained peptides from cone snails. Alpha-conotoxin PnIC selectively inhibits CHRNA7:CHRNB2 over CHRNA7 homopentamer. Its function is as follows. Component of neuronal acetylcholine receptors (nAChRs) that function as pentameric, ligand-gated cation channels with high calcium permeability among other activities. nAChRs are excitatory neurotrasnmitter receptors formed by a collection of nAChR subunits known to mediate synaptic transmission in the nervous system and the neuromuscular junction. Each nAchR subunit confers differential attributes to channel properties, including activation, deactivation and desensitization kinetics, pH sensitivity, cation permeability, and binding to allosteric modulators. CHRNA7 forms homopentameric neuronal acetylcholine receptors abundantly expressed in the central nervous system, characterized by fast desensitization and high calcium permeability. Also forms heteropentamers with CHRNB2, mainly expressed in basal forebrain cholinergic neurons. Involved in the modulation of calcium-dependent signaling pathways and influences the release of neurotransmitters, including dopamine, glutamate and GABA. Also expressed in non-neuronal cells such as immune cells like lymphocytes, monocytes and macrophages. In T cells, activation induces metabotropic signaling that results in an increase of intracellular Ca2+ concentrations, independent of ionotropic receptor functions. In macrophages, required for acetylcholine-mediated inhibition of TNF and other inflammatory cytokine release. Once activated by acetylcholine, nicotine or other agonists, selectively inhibits production of pro-inflammatory cytokines while leaving anti-inflammatory cytokines undisturbed. Stimulates the cholinergic anti-inflammatory pathway, controlling inflammation by inhibiting NFKB nuclear translocation and activating the JAK2-STAT3 pathway, independently of ion channel activity. Also expressed in the urothelium where it modulates reflex bladder activity by increasing intracellular calcium through internal stores and decreasing basal ATP release. The chain is Neuronal acetylcholine receptor subunit alpha-7 from Homo sapiens (Human).